We begin with the raw amino-acid sequence, 805 residues long: Transcription factor SFL1 (805 aa).

Over residues 1-24 (MSHLVSSSLGTTTTATPTSRSPHT) the composition is skewed to low complexity. The interval 1 to 110 (MSHLVSSSLG…NNNVSNNNST (110 aa)) is disordered. Over residues 25–69 (NHSTPYNQNSITSNRSSPVPKNSVNSRIIPQTMNPPIDMKSNNIL) the composition is skewed to polar residues. Residues 71-85 (PEKDTDTSRGDHSES) are compositionally biased toward basic and acidic residues. Positions 86 to 110 (KASSISSASGTTTTNNNNVSNNNST) are enriched in low complexity. The DNA-binding element occupies 117 to 226 (FIHKLYDMLH…LKNIKRRSSK (110 aa)). Disordered regions lie at residues 273–336 (MQSP…NQSP), 438–483 (QSNF…VAPQ), 513–675 (REDS…PAPQ), 691–746 (HQKS…SENH), and 759–805 (VSEL…RKLE). A compositionally biased stretch (low complexity) spans 295–310 (QQQQQQQQQQQQQQQQ). Polar residues-rich tracts occupy residues 454–480 (HGNS…NLNV) and 533–556 (PSRN…NFNP). A compositionally biased stretch (low complexity) spans 557 to 566 (QQSQSQSQVQ). 3 stretches are compositionally biased toward polar residues: residues 581 to 597 (ESTY…SQIL), 604 to 614 (VNHSPLVQQQQ), and 622 to 635 (NDSS…SSLP). Residues 637 to 659 (TRPLSRQQQQQQQTLHHPSTTSS) show a composition bias toward low complexity. A compositionally biased stretch (polar residues) spans 716 to 738 (PISSTAPTTMITSTSKPTSTSGA).

This sequence belongs to the HSF family.

The protein localises to the nucleus. Functionally, transcription factor that plays a role of repressor of filamentous growth and flocculation. Antagonizes functions of SFL2 and FLO8. Plays a role in the hyphal repression induced by secreted factors like dodecanol by competitors such as Pseudomonas aeruginosa and Burkholderia cenocepacia. This chain is Transcription factor SFL1 (SFL1), found in Candida albicans (strain SC5314 / ATCC MYA-2876) (Yeast).